A 506-amino-acid polypeptide reads, in one-letter code: DEAD-box ATP-dependent RNA helicase CshA (506 aa).

The Q motif motif lies at glutamine 2–lysine 30. The region spanning isoleucine 33–isoleucine 203 is the Helicase ATP-binding domain. Residue alanine 46 to threonine 53 coordinates ATP. The DEAD box signature appears at aspartate 150–aspartate 153. One can recognise a Helicase C-terminal domain in the interval glutamine 214–leucine 375. Positions glutamate 436 to lysine 506 are disordered. Residues lysine 468–threonine 480 show a composition bias toward basic residues.

The protein belongs to the DEAD box helicase family. CshA subfamily. In terms of assembly, oligomerizes, may be a member of the RNA degradosome.

It is found in the cytoplasm. The enzyme catalyses ATP + H2O = ADP + phosphate + H(+). Its function is as follows. DEAD-box RNA helicase possibly involved in RNA degradation. Unwinds dsRNA in both 5'- and 3'-directions, has RNA-dependent ATPase activity. The chain is DEAD-box ATP-dependent RNA helicase CshA from Staphylococcus aureus (strain MW2).